A 227-amino-acid chain; its full sequence is Ubiquitin domain-containing protein 1 (227 aa).

Residues 1–42 form a disordered region; sequence MGNCVGRQRRERPAAPGHPRKRAGRNEPLKKERLKWKSDYPM. Basic and acidic residues predominate over residues 24–38; the sequence is GRNEPLKKERLKWKS. One can recognise a Ubiquitin-like domain in the interval 149 to 224; it reads FPLKVRLSTG…IQVIINQPPP (76 aa).

As to quaternary structure, interacts with UBTD1.

Its function is as follows. May be involved in the regulation of cellular senescence through a positive feedback loop with TP53. Is a TP53 downstream target gene that increases the stability of TP53 protein by promoting the ubiquitination and degradation of MDM2. This chain is Ubiquitin domain-containing protein 1 (Ubtd1), found in Mus musculus (Mouse).